A 212-amino-acid polypeptide reads, in one-letter code: Adenylate kinase (212 aa).

10–15 (GAGKGT) serves as a coordination point for ATP. An NMP region spans residues 30 to 59 (STGDMFRAAMVNQTEMGVLAKSYIDKGELV). AMP contacts are provided by residues T31, R36, 57–59 (ELV), 86–89 (GYPR), and Q93. The tract at residues 127–159 (GRIIHRVTGETFHKVFNPPVDYKEEDYYQREDD) is LID. Residues R128 and 137–138 (TF) contribute to the ATP site. AMP-binding residues include R156 and R167. Q195 contributes to the ATP binding site.

It belongs to the adenylate kinase family. As to quaternary structure, monomer.

It is found in the cytoplasm. The enzyme catalyses AMP + ATP = 2 ADP. It functions in the pathway purine metabolism; AMP biosynthesis via salvage pathway; AMP from ADP: step 1/1. Functionally, catalyzes the reversible transfer of the terminal phosphate group between ATP and AMP. Plays an important role in cellular energy homeostasis and in adenine nucleotide metabolism. In Streptococcus pneumoniae (strain 70585), this protein is Adenylate kinase.